Here is a 100-residue protein sequence, read N- to C-terminus: Small ribosomal subunit protein uS14c (100 aa).

It belongs to the universal ribosomal protein uS14 family. Part of the 30S ribosomal subunit.

The protein resides in the plastid. It localises to the chloroplast. Functionally, binds 16S rRNA, required for the assembly of 30S particles. This Ceratophyllum demersum (Rigid hornwort) protein is Small ribosomal subunit protein uS14c.